We begin with the raw amino-acid sequence, 132 residues long: Glycine cleavage system H protein (132 aa).

Positions 27 to 109 (FATIGISAFA…FDFGWILKVK (83 aa)) constitute a Lipoyl-binding domain. Lys-68 is modified (N6-lipoyllysine).

The protein belongs to the GcvH family. As to quaternary structure, the glycine cleavage system is composed of four proteins: P, T, L and H. It depends on (R)-lipoate as a cofactor.

In terms of biological role, the glycine cleavage system catalyzes the degradation of glycine. The H protein shuttles the methylamine group of glycine from the P protein to the T protein. This is Glycine cleavage system H protein from Rhodopirellula baltica (strain DSM 10527 / NCIMB 13988 / SH1).